The following is a 236-amino-acid chain: Small ribosomal subunit protein uS2c (236 aa).

This sequence belongs to the universal ribosomal protein uS2 family.

The protein localises to the plastid. The protein resides in the chloroplast. This Barbarea verna (Land cress) protein is Small ribosomal subunit protein uS2c (rps2).